Here is a 443-residue protein sequence, read N- to C-terminus: UDP-N-acetylmuramate--L-alanine ligase (443 aa).

110 to 116 (GAHGKTS) provides a ligand contact to ATP.

Belongs to the MurCDEF family.

The protein localises to the cytoplasm. It catalyses the reaction UDP-N-acetyl-alpha-D-muramate + L-alanine + ATP = UDP-N-acetyl-alpha-D-muramoyl-L-alanine + ADP + phosphate + H(+). The protein operates within cell wall biogenesis; peptidoglycan biosynthesis. Functionally, cell wall formation. The polypeptide is UDP-N-acetylmuramate--L-alanine ligase (Lactococcus lactis subsp. cremoris (strain MG1363)).